A 360-amino-acid polypeptide reads, in one-letter code: Probable CCR4-associated factor 1 homolog 1 (360 aa).

A divalent metal cation contacts are provided by D37, E39, D155, and D226.

It belongs to the CAF1 family. Component of the CCR4-NOT complex, at least composed of CRR4 and CAF1 proteins. The cofactor is a divalent metal cation.

It is found in the nucleus. Its subcellular location is the cytoplasm. The enzyme catalyses Exonucleolytic cleavage of poly(A) to 5'-AMP.. Ubiquitous transcription factor required for a diverse set of processes. It is a component of the CCR4 complex involved in the control of gene expression. This Arabidopsis thaliana (Mouse-ear cress) protein is Probable CCR4-associated factor 1 homolog 1 (CAF1-1).